A 61-amino-acid polypeptide reads, in one-letter code: UPF0391 membrane protein Ajs_0703 (61 aa).

The next 2 membrane-spanning stretches (helical) occupy residues 5–25 and 33–53; these read AIIFAIISLIAGALGFTGVAA and VLFVVFLVLAVLFVVLALLGI.

The protein belongs to the UPF0391 family.

The protein resides in the cell membrane. The chain is UPF0391 membrane protein Ajs_0703 from Acidovorax sp. (strain JS42).